A 191-amino-acid polypeptide reads, in one-letter code: dTTP/UTP pyrophosphatase (191 aa).

Asp-65 functions as the Proton acceptor in the catalytic mechanism.

It belongs to the Maf family. YhdE subfamily. Requires a divalent metal cation as cofactor.

The protein localises to the cytoplasm. The enzyme catalyses dTTP + H2O = dTMP + diphosphate + H(+). The catalysed reaction is UTP + H2O = UMP + diphosphate + H(+). Nucleoside triphosphate pyrophosphatase that hydrolyzes dTTP and UTP. May have a dual role in cell division arrest and in preventing the incorporation of modified nucleotides into cellular nucleic acids. The sequence is that of dTTP/UTP pyrophosphatase from Leptospira biflexa serovar Patoc (strain Patoc 1 / Ames).